Consider the following 454-residue polypeptide: tRNA modification GTPase MnmE (454 aa).

(6S)-5-formyl-5,6,7,8-tetrahydrofolate contacts are provided by R23, E86, and R125. In terms of domain architecture, TrmE-type G spans G221–S376. N231 lines the K(+) pocket. GTP is bound by residues N231 to S236, T250 to T256, and D275 to G278. S235 contributes to the Mg(2+) binding site. Positions 250, 252, and 255 each coordinate K(+). Position 256 (T256) interacts with Mg(2+). K454 is a (6S)-5-formyl-5,6,7,8-tetrahydrofolate binding site.

Belongs to the TRAFAC class TrmE-Era-EngA-EngB-Septin-like GTPase superfamily. TrmE GTPase family. In terms of assembly, homodimer. Heterotetramer of two MnmE and two MnmG subunits. K(+) serves as cofactor.

The protein resides in the cytoplasm. Functionally, exhibits a very high intrinsic GTPase hydrolysis rate. Involved in the addition of a carboxymethylaminomethyl (cmnm) group at the wobble position (U34) of certain tRNAs, forming tRNA-cmnm(5)s(2)U34. This is tRNA modification GTPase MnmE from Koribacter versatilis (strain Ellin345).